The sequence spans 423 residues: Serine--tRNA ligase (423 aa).

231–233 (TAE) provides a ligand contact to L-serine. 262 to 264 (RSE) lines the ATP pocket. E285 provides a ligand contact to L-serine. Residue 349-352 (EISS) participates in ATP binding. S384 provides a ligand contact to L-serine.

This sequence belongs to the class-II aminoacyl-tRNA synthetase family. Type-1 seryl-tRNA synthetase subfamily. In terms of assembly, homodimer. The tRNA molecule binds across the dimer.

Its subcellular location is the cytoplasm. It carries out the reaction tRNA(Ser) + L-serine + ATP = L-seryl-tRNA(Ser) + AMP + diphosphate + H(+). The enzyme catalyses tRNA(Sec) + L-serine + ATP = L-seryl-tRNA(Sec) + AMP + diphosphate + H(+). It participates in aminoacyl-tRNA biosynthesis; selenocysteinyl-tRNA(Sec) biosynthesis; L-seryl-tRNA(Sec) from L-serine and tRNA(Sec): step 1/1. Its function is as follows. Catalyzes the attachment of serine to tRNA(Ser). Is also able to aminoacylate tRNA(Sec) with serine, to form the misacylated tRNA L-seryl-tRNA(Sec), which will be further converted into selenocysteinyl-tRNA(Sec). In Acinetobacter baumannii (strain AB307-0294), this protein is Serine--tRNA ligase.